The following is a 108-amino-acid chain: uncharacterized protein (108 aa).

Residues 48-73 (NSNIPSSSSSSPSFASFFSSTSTSAT) show a composition bias toward low complexity. Residues 48-81 (NSNIPSSSSSSPSFASFFSSTSTSATLNGSSNNK) form a disordered region.

This is an uncharacterized protein from Dictyostelium discoideum (Social amoeba).